The chain runs to 217 residues: UPF0502 protein ETA_20480 (217 aa).

Residues 169–188 form a disordered region; that stretch reads GEVDESSRADGHHPDDHRGD. The segment covering 173 to 188 has biased composition (basic and acidic residues); the sequence is ESSRADGHHPDDHRGD.

This sequence belongs to the UPF0502 family.

The protein is UPF0502 protein ETA_20480 of Erwinia tasmaniensis (strain DSM 17950 / CFBP 7177 / CIP 109463 / NCPPB 4357 / Et1/99).